The primary structure comprises 120 residues: Large ribosomal subunit protein uL18 (120 aa).

Belongs to the universal ribosomal protein uL18 family. In terms of assembly, part of the 50S ribosomal subunit; part of the 5S rRNA/L5/L18/L25 subcomplex. Contacts the 5S and 23S rRNAs.

Functionally, this is one of the proteins that bind and probably mediate the attachment of the 5S RNA into the large ribosomal subunit, where it forms part of the central protuberance. This is Large ribosomal subunit protein uL18 from Methylorubrum populi (strain ATCC BAA-705 / NCIMB 13946 / BJ001) (Methylobacterium populi).